Reading from the N-terminus, the 148-residue chain is Large ribosomal subunit protein uL15 (148 aa).

The interval 1–57 (MRLNDVKPQKGSKKRRRRVGRGISAGQGASAGLGMRGQKSRSGSGTRPGFEGGQQPL) is disordered. Over residues 10 to 20 (KGSKKRRRRVG) the composition is skewed to basic residues. Positions 23–35 (ISAGQGASAGLGM) are enriched in gly residues.

This sequence belongs to the universal ribosomal protein uL15 family. In terms of assembly, part of the 50S ribosomal subunit.

Binds to the 23S rRNA. The chain is Large ribosomal subunit protein uL15 from Trichormus variabilis (strain ATCC 29413 / PCC 7937) (Anabaena variabilis).